Reading from the N-terminus, the 505-residue chain is Peroxisome proliferator-activated receptor gamma (505 aa).

T84 is a glycosylation site (O-linked (GlcNAc) threonine). The residue at position 112 (S112) is a Phosphoserine; by MAPK. Residues 136 to 210 (AIECRVCGDK…VGMSHNAIRF (75 aa)) constitute a DNA-binding region (nuclear receptor). 2 NR C4-type zinc fingers span residues 139 to 159 (CRVC…CEGC) and 176 to 198 (CDLN…FQKC). An interaction with FAM120B region spans residues 205 to 280 (HNAIRFGRMP…DKSPFVIYDM (76 aa)). In terms of domain architecture, NR LBD spans 238 to 503 (DLRALAKHLY…HPLLQEIYKD (266 aa)). K252 participates in a covalent cross-link: Glycyl lysine isopeptide (Lys-Gly) (interchain with G-Cter in ubiquitin). A 9aaTAD motif is present at residues 495-503 (PLLQEIYKD).

This sequence belongs to the nuclear hormone receptor family. NR1 subfamily. In terms of assembly, interacts with FOXO1 (acetylated form). Heterodimer with other nuclear receptors, such as RXRA. The heterodimer with the retinoic acid receptor RXRA is called adipocyte-specific transcription factor ARF6. Interacts with NCOA6 coactivator, leading to a strong increase in transcription of target genes. Interacts with coactivator PPARBP, leading to a mild increase in transcription of target genes. Interacts with NOCA7 in a ligand-inducible manner. Interacts with NCOA1 and NCOA2 LXXLL motifs. Interacts with ASXL1, ASXL2, DNTTIP2, FAM120B, MAP2K1/MEK1, NR0B2, PDPK1, PRDM16, PRMT2 and TGFB1I1. Interacts (when activated by agonist) with PPP5C. Interacts with HELZ2 and THRAP3; the interaction stimulates the transcriptional activity of PPARG. Interacts with PER2, the interaction is ligand dependent and blocks PPARG recruitment to target promoters. Interacts with NOCT. Interacts with ACTN4. Interacts (when in the liganded conformation) with GPS2. Interacts with CRY1 and CRY2 in a ligand-dependent manner. In the absence of hormonal ligand, interacts with TACC1. In macrophages, interacts with PAQR3 and STUB1; the interactions promote PPARG poylubiquitination and STUB1-mediated degradation. In terms of processing, phosphorylated by MAPK. The phosphorylation inhibits PPAR gamma activity. O-GlcNAcylation at Thr-84 reduces transcriptional activity in adipocytes. Post-translationally, phosphorylated at basal conditions and dephosphorylated when treated with the ligand. May be dephosphorylated by PPP5C. The phosphorylated form may be inactive and dephosphorylation at induces adipogenic activity. In terms of processing, ubiquitinated by E3 ubiquitin-protein ligase complex containing FBXO9; leading to proteasomal degradation. Ubiquitinated at Lys-252 by TRIM55 leading to proteasomal degradation. Ubiquitinated by E3 ubiquitin-protein ligase STUB1/CHIP; leading to proteasomal degradation. Highest expression in adipose tissue.

It localises to the nucleus. The protein resides in the cytoplasm. PDPK1 activates its transcriptional activity independently of its kinase activity. Nuclear receptor that binds peroxisome proliferators such as hypolipidemic drugs and fatty acids. Once activated by a ligand, the nuclear receptor binds to DNA specific PPAR response elements (PPRE) and modulates the transcription of its target genes, such as acyl-CoA oxidase. It therefore controls the peroxisomal beta-oxidation pathway of fatty acids. Key regulator of adipocyte differentiation and glucose homeostasis. ARF6 acts as a key regulator of the tissue-specific adipocyte P2 (aP2) enhancer. Acts as a critical regulator of gut homeostasis by suppressing NF-kappa-B-mediated pro-inflammatory responses. Plays a role in the regulation of cardiovascular circadian rhythms by regulating the transcription of BMAL1 in the blood vessels. In Rattus norvegicus (Rat), this protein is Peroxisome proliferator-activated receptor gamma (Pparg).